A 311-amino-acid chain; its full sequence is Olfactory receptor 2A5 (311 aa).

Residues Met1–Met24 are Extracellular-facing. The N-linked (GlcNAc...) asparagine glycan is linked to Asn4. The helical transmembrane segment at Leu25–Ile48 threads the bilayer. The Cytoplasmic portion of the chain corresponds to Trp49–Thr56. Residues Pro57 to Pro78 traverse the membrane as a helical segment. Over Lys79–Gln100 the chain is Extracellular. A disulfide bond links Cys97 and Cys189. Residues Thr101–Tyr120 traverse the membrane as a helical segment. Over Asp121–Gly139 the chain is Cytoplasmic. Residues Val140–Val158 traverse the membrane as a helical segment. Residues His159–Gln196 are Extracellular-facing. Residues Val197–Ser219 traverse the membrane as a helical segment. Over Arg220–Lys236 the chain is Cytoplasmic. Residues Ala237–Tyr259 form a helical membrane-spanning segment. Over Met260–Lys272 the chain is Extracellular. The chain crosses the membrane as a helical span at residues Val273–Leu292. At Arg293–Lys311 the chain is on the cytoplasmic side.

This sequence belongs to the G-protein coupled receptor 1 family.

The protein resides in the cell membrane. Functionally, odorant receptor. This chain is Olfactory receptor 2A5 (OR2A5), found in Homo sapiens (Human).